The following is an 84-amino-acid chain: Insulin-like peptide 05 (84 aa).

The signal sequence occupies residues 1–22 (MKTPILFVVVVAVLIVTDSAEG). Positions 23–37 (FKGKANSFLKPLQRR) are excised as a propeptide. 3 disulfide bridges follow: cysteine 43–cysteine 48, cysteine 44–cysteine 73, and cysteine 57–cysteine 61.

This sequence belongs to the insulin family.

Its subcellular location is the secreted. Functionally, insulin decreases blood glucose concentration. May have evolved to activate insulin receptors (INSR) in vertebrates. Molecular docking studies reveals unique interaction with the human insulin receptor. In vivo, insulin-like peptide injection reduces blood glucose levels in two models of zebrafish diabetes (streptozotocin- and glucose-induced). Also shorter swimming distance of zebrafish larvae, an effect which is not observed with human insulin. This Exaiptasia diaphana (Tropical sea anemone) protein is Insulin-like peptide 05.